The following is a 349-amino-acid chain: Spermidine/putrescine import ATP-binding protein PotA (349 aa).

One can recognise an ABC transporter domain in the interval 7–237; sequence IELKGITKSY…PANSFVAKFI (231 aa). 39 to 46 serves as a coordination point for ATP; sequence GPSGCGKT.

This sequence belongs to the ABC transporter superfamily. Spermidine/putrescine importer (TC 3.A.1.11.1) family. In terms of assembly, the complex is composed of two ATP-binding proteins (PotA), two transmembrane proteins (PotB and PotC) and a solute-binding protein (PotD).

It is found in the cell membrane. The catalysed reaction is ATP + H2O + polyamine-[polyamine-binding protein]Side 1 = ADP + phosphate + polyamineSide 2 + [polyamine-binding protein]Side 1.. In terms of biological role, part of the ABC transporter complex PotABCD involved in spermidine/putrescine import. Responsible for energy coupling to the transport system. The chain is Spermidine/putrescine import ATP-binding protein PotA from Clostridium perfringens (strain SM101 / Type A).